We begin with the raw amino-acid sequence, 350 residues long: Ribosomal RNA small subunit methyltransferase C (350 aa).

The protein belongs to the methyltransferase superfamily. RsmC family. In terms of assembly, monomer.

It localises to the cytoplasm. The catalysed reaction is guanosine(1207) in 16S rRNA + S-adenosyl-L-methionine = N(2)-methylguanosine(1207) in 16S rRNA + S-adenosyl-L-homocysteine + H(+). Functionally, specifically methylates the guanine in position 1207 of 16S rRNA in the 30S particle. The protein is Ribosomal RNA small subunit methyltransferase C of Sodalis glossinidius (strain morsitans).